A 557-amino-acid polypeptide reads, in one-letter code: Protein PECTIC ARABINOGALACTAN SYNTHESIS-RELATED (557 aa).

The tract at residues 1 to 54 (MAELRHSSSLGSRSSSSPLRAAGDEDSSSPHVHDHSPNGGDDEDGRPRHPSRDR) is disordered. At 1 to 79 (MAELRHSSSL…DPRVSPQKNK (79 aa)) the chain is on the cytoplasmic side. The segment covering 7–20 (SSSLGSRSSSSPLR) has biased composition (low complexity). Residues 45–54 (GRPRHPSRDR) show a composition bias toward basic and acidic residues. Residues 80-100 (ISLLLILILAIASLISVYGII) traverse the membrane as a helical; Signal-anchor for type II membrane protein segment. At 101–557 (NHLNAPYLCK…NPLTPCMCKA (457 aa)) the chain is on the lumenal side. N-linked (GlcNAc...) asparagine glycosylation is found at asparagine 156, asparagine 188, and asparagine 324. 336 to 338 (HLR) serves as a coordination point for substrate. The N-linked (GlcNAc...) asparagine glycan is linked to asparagine 375.

Belongs to the glycosyltransferase GT106 family. In terms of tissue distribution, widely expressed with the highest expression in reproductive tissues and roots.

Its subcellular location is the golgi apparatus membrane. The protein operates within glycan metabolism; pectin biosynthesis. Its function is as follows. Glycosyltransferase involved in the biosynthesis of pectic type-II arabinogalactans. The protein is Protein PECTIC ARABINOGALACTAN SYNTHESIS-RELATED of Arabidopsis thaliana (Mouse-ear cress).